A 314-amino-acid chain; its full sequence is DegV domain-containing protein XAC3508 (314 aa).

The region spanning 3–307 (IGIVVDSACD…KGALAVGFAA (305 aa)) is the DegV domain. Residues Thr63 and Ser96 each coordinate hexadecanoate.

Its function is as follows. May bind long-chain fatty acids, such as palmitate, and may play a role in lipid transport or fatty acid metabolism. This chain is DegV domain-containing protein XAC3508, found in Xanthomonas axonopodis pv. citri (strain 306).